Consider the following 113-residue polypeptide: U11-theraphotoxin-Hhn1m (113 aa).

A signal peptide spans 1–21 (MNTVRGTFLLVFGLAASLGQA). The propeptide occupies 22 to 74 (DKNENRREMQKKTEQGKSYLNFAENLLLQKLEELEAKLLEKHSKKSKNSRQKR). 3 disulfides stabilise this stretch: Cys75–Cys90, Cys82–Cys95, and Cys89–Cys110.

This sequence belongs to the neurotoxin 14 (magi-1) family. 01 (HNTX-16) subfamily. Expressed by the venom gland.

It localises to the secreted. Its function is as follows. Probable ion channel inhibitor. The polypeptide is U11-theraphotoxin-Hhn1m (Cyriopagopus hainanus (Chinese bird spider)).